Consider the following 232-residue polypeptide: tRNA (guanine-N(1)-)-methyltransferase (232 aa).

S-adenosyl-L-methionine contacts are provided by residues Gly-111 and 131–136; that span reads IGDYIL.

It belongs to the RNA methyltransferase TrmD family. As to quaternary structure, homodimer.

The protein localises to the cytoplasm. It carries out the reaction guanosine(37) in tRNA + S-adenosyl-L-methionine = N(1)-methylguanosine(37) in tRNA + S-adenosyl-L-homocysteine + H(+). Specifically methylates guanosine-37 in various tRNAs. The polypeptide is tRNA (guanine-N(1)-)-methyltransferase (Bartonella bacilliformis (strain ATCC 35685 / KC583 / Herrer 020/F12,63)).